Reading from the N-terminus, the 295-residue chain is Vesicle-associated protein 4-2 (295 aa).

Basic and acidic residues predominate over residues 1-10 (MTMTEEKPTS). A disordered region spans residues 1 to 99 (MTMTEEKPTS…PSPSVSSVAK (99 aa)). The span at 31-53 (NAASSAATSPFPSGASSSSTSSH) shows a compositional bias: low complexity. Basic residues predominate over residues 54–71 (LHNHHQHHHQHHHQHHHQ). A compositionally biased stretch (polar residues) spans 83-98 (GQNQHPTPSPSVSSVA). One can recognise an MSP domain in the interval 107–229 (RLKLDPSEKL…KEQILRVIFL (123 aa)). Residues 249 to 263 (DAAVEARKKPPEETG) show a composition bias toward basic and acidic residues. The disordered stretch occupies residues 249–270 (DAAVEARKKPPEETGPKMIGEG). Position 294 is a phosphoserine (Ser294).

Belongs to the VAMP-associated protein (VAP) (TC 9.B.17) family.

Functionally, may play a role in vesicle trafficking. This is Vesicle-associated protein 4-2 (PVA42) from Arabidopsis thaliana (Mouse-ear cress).